The sequence spans 221 residues: Probable endo-1,4-beta-xylanase B (221 aa).

Residues 1–19 (MVSFSSLALALSTVVGVLA) form the signal peptide. In terms of domain architecture, GH11 spans 33–221 (QLTHSQTGTK…SSGSATMTVS (189 aa)). Catalysis depends on glutamate 117, which acts as the Nucleophile. The active-site Proton donor is the glutamate 208.

This sequence belongs to the glycosyl hydrolase 11 (cellulase G) family.

It localises to the secreted. The catalysed reaction is Endohydrolysis of (1-&gt;4)-beta-D-xylosidic linkages in xylans.. Its pathway is glycan degradation; xylan degradation. In terms of biological role, endo-1,4-beta-xylanase involved in the hydrolysis of xylan, a major structural heterogeneous polysaccharide found in plant biomass representing the second most abundant polysaccharide in the biosphere, after cellulose. The protein is Probable endo-1,4-beta-xylanase B (xlnB) of Aspergillus clavatus (strain ATCC 1007 / CBS 513.65 / DSM 816 / NCTC 3887 / NRRL 1 / QM 1276 / 107).